The following is a 503-amino-acid chain: Maturase K (503 aa).

It belongs to the intron maturase 2 family. MatK subfamily.

It localises to the plastid. It is found in the chloroplast. In terms of biological role, usually encoded in the trnK tRNA gene intron. Probably assists in splicing its own and other chloroplast group II introns. The chain is Maturase K from Thryptomene saxicola (Rock thryptomene).